The chain runs to 430 residues: Gamma-glutamyl phosphate reductase (430 aa).

The protein belongs to the gamma-glutamyl phosphate reductase family.

Its subcellular location is the cytoplasm. The catalysed reaction is L-glutamate 5-semialdehyde + phosphate + NADP(+) = L-glutamyl 5-phosphate + NADPH + H(+). It participates in amino-acid biosynthesis; L-proline biosynthesis; L-glutamate 5-semialdehyde from L-glutamate: step 2/2. Its function is as follows. Catalyzes the NADPH-dependent reduction of L-glutamate 5-phosphate into L-glutamate 5-semialdehyde and phosphate. The product spontaneously undergoes cyclization to form 1-pyrroline-5-carboxylate. This is Gamma-glutamyl phosphate reductase from Polaromonas naphthalenivorans (strain CJ2).